Reading from the N-terminus, the 982-residue chain is MIVLDIPKMDYGQIEIYNDYFRNVDKKTIKYTPMECIEYKLSYCAIYNDRELPIMIGSSLDISKENPLNLKGYFIIDGICKSVNNIKIKEKIHFSKDRAYLSDDSIIQIKDMFNMTIKNNKNTLKWNLPLNWSDIIKYSDHKKELENHLKIIDSFNKKAEKPIKNEIDLISLCYMFECWLGLREEPRLYYRLVTPGELIHDIIKEKRSVIKCFRTNTWTVKNIRNVFCVSEDMKHYNKIGDLESIRRITIPSSRSNAPMKERRVEDNDKYKICPIQTSDGSLCGTITYLCKDAKITTKIDTIIVEKADNGLHTFFNNTYLGKVKVKTKESDIYCIDKICYIFGNIGRIIKGNYLCSYTGELLDYKNYNPPIRSMFVCNMIKQAITGDSVYSGDILHNTKSLINGDLGHKLEIAIMPWKKFNIEDAIVISNKVSKLFRSKRTIIHRENDVKILNVYVNINQNITKGDLLYRTYDPMQVKTINFVYAEHDGKVKEIIREEKYLKLILIKERDLEVGDKMSSMHGQKGIVSLIENNMPYYYKNGEKVEIDLIINPHAFPSRMTLGQIKEMGEKEEYVYIEDTKLENKIIVGKCLYLALRHQVDDKVQFRNGGNIDIVTKQPVSGRKRSGGLRFGQMERDILIGLGAWNTIKEIWSIDRSKIKIDSKTGRINWIRYDKEMEIGQYFKICLSYMRSLGRDILIKNDKYSIVEFDNSYLPKTDTMKFGDLDVLDLRIYKGIVMLPLCLRSTYLNKLYVDRKYSEAEKEVTKLLKSKNGAYHTLVEGHRVDRCIRSVIVPDPTLDIDTIKIPFGANIGCEYGLLNRQPSLNVDSIKLVKLKQGSNKTIAINPLLCQSFNADFDGDEMNIYGIRNKESIEEMKILAKVIENKTQDYILDKKDLTANKKGILEMIEKGSKGKMFNFEHMFKEIGKVTINKKEINIKGCYNNSINDEEWYEMCKVARENAASISINTPITGYLENICNEMYL.

Belongs to the RNA polymerase beta chain family.

It carries out the reaction RNA(n) + a ribonucleoside 5'-triphosphate = RNA(n+1) + diphosphate. The presence of the two linear plasmids, termed pGKL1 and pGKL2, in strains of Kluyveromyces lactis confers the killer phenotype to the host cell, by promoting the secretion of a toxin able to inhibit the growth of sensitive strains. This Kluyveromyces lactis (strain ATCC 8585 / CBS 2359 / DSM 70799 / NBRC 1267 / NRRL Y-1140 / WM37) (Yeast) protein is Probable DNA-directed RNA polymerase.